Reading from the N-terminus, the 78-residue chain is Acyl carrier protein (78 aa).

Residues 2-77 (SDVLERVSKI…DAVKFISEKV (76 aa)) form the Carrier domain. Ser-37 is subject to O-(pantetheine 4'-phosphoryl)serine.

It belongs to the acyl carrier protein (ACP) family. 4'-phosphopantetheine is transferred from CoA to a specific serine of apo-ACP by AcpS. This modification is essential for activity because fatty acids are bound in thioester linkage to the sulfhydryl of the prosthetic group.

It localises to the cytoplasm. Its pathway is lipid metabolism; fatty acid biosynthesis. Functionally, carrier of the growing fatty acid chain in fatty acid biosynthesis. The chain is Acyl carrier protein from Maricaulis maris (strain MCS10) (Caulobacter maris).